Reading from the N-terminus, the 323-residue chain is MIFSTLEHILTHISFSTVSVVITLHLITLLVNEIVGLYNSLEKGMLVTFFCITGLLVTRWVYWKHFPLSDLYESLIFLSWSFYLIHMIPSFLKKEKNSLNVITAPSAIFTQGFATSGLLTEMHQSGILVPALQSQWLMMHVSMMVLGYAALLGGSLLSVTLLIIIFQKDLIQVFDKRKHLLNESFFFGEIQYINEKSNIVQNASPSYVRNYYRSQLIEQLDHWSYRVISLGFIFLTIGILSGAVWANEAWGSYWNWDPKETWAFITWTIFAIYLHIRTNKNLRGANSAIVAFIGFLIIWICYFGVNLLGIGLHSYGSFTLTLN.

Helical transmembrane passes span 18-38 (VSVV…VGLY), 43-63 (KGML…WVYW), 71-91 (LYES…IPSF), 99-119 (LNVI…SGLL), 146-166 (LGYA…IIIF), 227-247 (VISL…VWAN), 256-276 (WDPK…YLHI), and 288-308 (AIVA…VNLL).

The protein belongs to the CcmF/CycK/Ccl1/NrfE/CcsA family. As to quaternary structure, may interact with Ccs1.

The protein localises to the plastid. The protein resides in the chloroplast thylakoid membrane. Functionally, required during biogenesis of c-type cytochromes (cytochrome c6 and cytochrome f) at the step of heme attachment. This is Cytochrome c biogenesis protein CcsA from Spinacia oleracea (Spinach).